Consider the following 570-residue polypeptide: Pantothenate kinase 2, mitochondrial (570 aa).

Residues 1–31 (MRRLGPFHPRVHWAAPPSLSSGLHRLLFLRG) constitute a mitochondrion transit peptide. Disordered regions lie at residues 34 to 94 (IPSS…PRAR) and 127 to 198 (GRLG…SVSR). The Nucleolar localization signal motif lies at 82 to 94 (RWRNGRGGRPRAR). A compositionally biased stretch (basic residues) spans 84–93 (RNGRGGRPRA). Positions 155–164 (PEGRRQEPLR) are enriched in basic and acidic residues. Residues Ser-168, Ser-169, and Ser-189 each carry the phosphoserine modification. Low complexity predominate over residues 168 to 179 (SSASVPAVGASA). A Nuclear export signal motif is present at residues 268-275 (LELKDLTL). Glu-338 serves as the catalytic Proton acceptor. 3 residues coordinate acetyl-CoA: Ser-392, Ser-395, and Arg-407.

It belongs to the type II pantothenate kinase family. In terms of assembly, homodimer. In terms of processing, synthesized as a 62-kDa precursor which is proteolytically processed by the mitochondrial-processing peptidase (MPP) via a 59-kDa intermediate to yield the mature mitochondrial 48-kDa subunit. As to expression, expressed in the brain (at protein level). Ubiquitous. Highly expressed in the testis. Expressed in the umbilical vein endothelial cells (HUVEC).

The protein resides in the mitochondrion. The protein localises to the mitochondrion intermembrane space. Its subcellular location is the nucleus. It is found in the cytoplasm. The enzyme catalyses (R)-pantothenate + ATP = (R)-4'-phosphopantothenate + ADP + H(+). It participates in cofactor biosynthesis; coenzyme A biosynthesis; CoA from (R)-pantothenate: step 1/5. Strongly inhibited by acetyl-CoA and its thioesters. Activated by palmitoylcarnitine. In terms of biological role, mitochondrial isoform that catalyzes the phosphorylation of pantothenate to generate 4'-phosphopantothenate in the first and rate-determining step of coenzyme A (CoA) synthesis. Required for angiogenic activity of umbilical vein of endothelial cells (HUVEC). Cytoplasmic isoform that catalyzes the phosphorylation of pantothenate to generate 4'-phosphopantothenate in the first and rate-determining step of coenzyme A (CoA) synthesis. In Homo sapiens (Human), this protein is Pantothenate kinase 2, mitochondrial (PANK2).